The chain runs to 129 residues: uncharacterized protein (129 aa).

The disordered stretch occupies residues 52-94; that stretch reads NGDEESQDDWLNDLLKSDGDGGKAGPVDPSHPMETTTTDHSSQ. Residues 53 to 62 show a composition bias toward acidic residues; the sequence is GDEESQDDWL. A compositionally biased stretch (polar residues) spans 84–94; it reads METTTTDHSSQ.

This is an uncharacterized protein from Caenorhabditis elegans.